The chain runs to 236 residues: Small ribosomal subunit protein uS2c (236 aa).

Belongs to the universal ribosomal protein uS2 family.

The protein localises to the plastid. It localises to the chloroplast. The protein is Small ribosomal subunit protein uS2c (rps2) of Oenothera parviflora (Small-flowered evening primrose).